The chain runs to 501 residues: Ribose import ATP-binding protein RbsA (501 aa).

ABC transporter domains are found at residues 5–241 (LELK…VGRK) and 249–495 (LNLP…VGKQ). Residue 37 to 44 (GENGAGKS) participates in ATP binding.

The protein belongs to the ABC transporter superfamily. Ribose importer (TC 3.A.1.2.1) family. The complex is composed of an ATP-binding protein (RbsA), two transmembrane proteins (RbsC) and a solute-binding protein (RbsB).

The protein resides in the cell inner membrane. It catalyses the reaction D-ribose(out) + ATP + H2O = D-ribose(in) + ADP + phosphate + H(+). In terms of biological role, part of the ABC transporter complex RbsABC involved in ribose import. Responsible for energy coupling to the transport system. The sequence is that of Ribose import ATP-binding protein RbsA from Photorhabdus laumondii subsp. laumondii (strain DSM 15139 / CIP 105565 / TT01) (Photorhabdus luminescens subsp. laumondii).